The primary structure comprises 427 residues: MTYQHIYNIIKKKAYFDAHQAVLIAVSGGVDSMNLLHFLHAFQAKLQIRIGIAHVNHKQRPESDDEEAYLRSWAKKHAIPIYVAYFQGAFSENAARHLRYQFFEEIMQQEHYSALVTAHHADDQAETILMRLIRGSRLRHLAGIREVQPFANGQLIRPFLTVSKAELPNPFHFEDHSNDSMAYFRNRVRHHYLPDFKRENPQATQSLIDLSAESRLLLQAFDDLTKGLEFHRLNCFLAQSAAVQFFLLQHYLETFPQLAIKKSQFDDLLHIIRRQKQGIYPIKNTYCLLIEKESFAIKKIIPKTDLNREFKMVSYGDSLNYRGYRFVFSGSLTDKGHDIAIPLYSLSPVTLRHRQAGDRLFLGEFSKKLRRLFIDGKFTSEQRQNAIVGEQAGVIIFVLVGDETYLRKASKHDIMLAKLYIDKLEKR.

27–32 (SGGVDS) lines the ATP pocket.

The protein belongs to the tRNA(Ile)-lysidine synthase family.

It is found in the cytoplasm. It catalyses the reaction cytidine(34) in tRNA(Ile2) + L-lysine + ATP = lysidine(34) in tRNA(Ile2) + AMP + diphosphate + H(+). Functionally, ligates lysine onto the cytidine present at position 34 of the AUA codon-specific tRNA(Ile) that contains the anticodon CAU, in an ATP-dependent manner. Cytidine is converted to lysidine, thus changing the amino acid specificity of the tRNA from methionine to isoleucine. The chain is tRNA(Ile)-lysidine synthase from Streptococcus equi subsp. equi (strain 4047).